Reading from the N-terminus, the 201-residue chain is Recombination protein RecR (201 aa).

The C4-type zinc-finger motif lies at 60–75; the sequence is CSCCGNVDTIDPCTVC. Residues 83–178 form the Toprim domain; it reads SVIIVVEDVA…KITRLAHGVP (96 aa).

It belongs to the RecR family.

Its function is as follows. May play a role in DNA repair. It seems to be involved in an RecBC-independent recombinational process of DNA repair. It may act with RecF and RecO. This is Recombination protein RecR from Sinorhizobium fredii (strain NBRC 101917 / NGR234).